Consider the following 545-residue polypeptide: Cryptochrome-1 (545 aa).

The Photolyase/cryptochrome alpha/beta domain maps to 3–140 (INNILWFRHG…RCVENVSHTL (138 aa)). FAD-binding positions include Arg237, Ser265, Ser267, Gln308, His375, 407-409 (DAD), Cys413, and Asn416.

This sequence belongs to the DNA photolyase class-1 family. Interacts with tim and per; promoted by light conditions. Requires FAD as cofactor.

It localises to the cytoplasm. The protein localises to the perinuclear region. It is found in the nucleus. Its function is as follows. Blue light-dependent regulator that is the input of the circadian feedback loop. Has no photolyase activity for cyclobutane pyrimidine dimers or 6-4 photoproducts. Regulation of expression by light suggests a role in photoreception for locomotor activity rhythms. Functions, together with per, as a transcriptional repressor required for the oscillation of peripheral circadian clocks and for the correct specification of clock cells. Genes directly activated by the transcription factors Clock (Clk) and cycle (cyc) are repressed by cry. The chain is Cryptochrome-1 from Anopheles gambiae (African malaria mosquito).